Reading from the N-terminus, the 466-residue chain is Ribulose bisphosphate carboxylase large chain (466 aa).

An N6,N6,N6-trimethyllysine modification is found at Lys5. Positions 114 and 164 each coordinate substrate. The active-site Proton acceptor is Lys166. A substrate-binding site is contributed by Lys168. Positions 192, 194, and 195 each coordinate Mg(2+). Lys192 carries the N6-carboxylysine modification. The Proton acceptor role is filled by His285. Residues Arg286, His318, and Ser370 each coordinate substrate.

This sequence belongs to the RuBisCO large chain family. Type I subfamily. In terms of assembly, heterohexadecamer of 8 large chains and 8 small chains; disulfide-linked. The disulfide link is formed within the large subunit homodimers. Requires Mg(2+) as cofactor. The disulfide bond which can form in the large chain dimeric partners within the hexadecamer appears to be associated with oxidative stress and protein turnover.

It localises to the plastid. The protein localises to the chloroplast. It catalyses the reaction 2 (2R)-3-phosphoglycerate + 2 H(+) = D-ribulose 1,5-bisphosphate + CO2 + H2O. The catalysed reaction is D-ribulose 1,5-bisphosphate + O2 = 2-phosphoglycolate + (2R)-3-phosphoglycerate + 2 H(+). Functionally, ruBisCO catalyzes two reactions: the carboxylation of D-ribulose 1,5-bisphosphate, the primary event in carbon dioxide fixation, as well as the oxidative fragmentation of the pentose substrate in the photorespiration process. Both reactions occur simultaneously and in competition at the same active site. This chain is Ribulose bisphosphate carboxylase large chain, found in Hedera helix (English ivy).